Reading from the N-terminus, the 402-residue chain is CCA-adding enzyme (402 aa).

ATP-binding residues include Gly32 and Arg35. The CTP site is built by Gly32 and Arg35. Residues Asp45 and Asp47 each contribute to the Mg(2+) site. The ATP site is built by Arg116, Asp159, Arg162, Arg165, and Arg168. 5 residues coordinate CTP: Arg116, Asp159, Arg162, Arg165, and Arg168.

Belongs to the tRNA nucleotidyltransferase/poly(A) polymerase family. Bacterial CCA-adding enzyme type 3 subfamily. In terms of assembly, homodimer. The cofactor is Mg(2+).

The catalysed reaction is a tRNA precursor + 2 CTP + ATP = a tRNA with a 3' CCA end + 3 diphosphate. It carries out the reaction a tRNA with a 3' CCA end + 2 CTP + ATP = a tRNA with a 3' CCACCA end + 3 diphosphate. Catalyzes the addition and repair of the essential 3'-terminal CCA sequence in tRNAs without using a nucleic acid template. Adds these three nucleotides in the order of C, C, and A to the tRNA nucleotide-73, using CTP and ATP as substrates and producing inorganic pyrophosphate. tRNA 3'-terminal CCA addition is required both for tRNA processing and repair. Also involved in tRNA surveillance by mediating tandem CCA addition to generate a CCACCA at the 3' terminus of unstable tRNAs. While stable tRNAs receive only 3'-terminal CCA, unstable tRNAs are marked with CCACCA and rapidly degraded. The chain is CCA-adding enzyme from Streptococcus pyogenes serotype M2 (strain MGAS10270).